The primary structure comprises 290 residues: MEGVNGKKVGHLCENISSFVRQCIFSILSVGPVPSHIAFIMDGNRRYSKKQNLLDGNGHRAGFSALINMLKYCYELGVKYITVYAFSIDNFKRRPEEVVSLMKLMQEKIDELTKEESIVNRLGIRIYFQGNLKLLSDHVRLAAERAMVKTSGNSKAILSICVAYTSTDEIVHAVQESCEEKWDEIRKLDVNNDGSNLIRLEENVKDKNEHRIGVTNVDRHMYMSVCPDPDIIIRTSGATRLSNFLLWQSSHCLLYSPAALWPEIGLRHLIWVILDFQRNYLYLKEKKKQS.

The active site involves aspartate 42.

Belongs to the UPP synthase family. It depends on Mg(2+) as a cofactor. In terms of tissue distribution, expressed in leaf trichomes and stem trichomes. Expressed at low levels in young leaves, stems and old leaves.

It localises to the cytoplasm. Its subcellular location is the cytosol. The catalysed reaction is n isopentenyl diphosphate + (2E,6E)-farnesyl diphosphate = a di-trans,poly-cis-polyprenyl diphosphate + n diphosphate. Catalyzes cis-prenyl chain elongation to produce the polyprenyl backbone of dolichol, a glycosyl carrier-lipid required for the biosynthesis of several classes of glycoprotein. This Solanum lycopersicum (Tomato) protein is Dehydrodolichyl diphosphate synthase CPT3.